A 621-amino-acid chain; its full sequence is Pre-mRNA-processing protein 45 (621 aa).

Disordered regions lie at residues 1 to 73, 137 to 164, 220 to 251, 347 to 438, and 542 to 621; these read MSAT…YANG, SQRT…SNTE, AQRD…RSPP, RARE…ELRM, and GKND…EHDS. Residues 36–51 show a composition bias toward low complexity; it reads PSTSSSSSALVSTSSP. 2 stretches are compositionally biased toward basic and acidic residues: residues 140-164 and 220-229; these read TDIK…SNTE and AQRDPLEPPR. Residues 239 to 248 show a composition bias toward pro residues; sequence PPSPPPPVLR. A compositionally biased stretch (basic and acidic residues) spans 364–380; sequence GRDDDVASRLADSDARP. The segment covering 403 to 417 has biased composition (acidic residues); that stretch reads DSDESAASDEEDDEG. Basic and acidic residues-rich tracts occupy residues 418-437 and 594-621; these read ARER…RELR and EDAK…EHDS.

Belongs to the SNW family. As to quaternary structure, associated with the spliceosome.

It localises to the nucleus. Its function is as follows. Involved in pre-mRNA splicing. This chain is Pre-mRNA-processing protein 45 (PRP45), found in Mycosarcoma maydis (Corn smut fungus).